Reading from the N-terminus, the 722-residue chain is MQWGTPSQKDKKVNPVIKKFQYGNDTVTLETGRIARQASGAVLASMGQTSVLVAVTGSKEAKPGQDFFPLSVHYQEKAYAAGKIPGGFFKREARPSEKETLTSRLIDRPIRPLFPNGFLNEVQVVCTVISAEKDVDPDIVAMIGTSAALAISGIPFNGPIGAARVGYTQESGYLLNPTYSTLKTSELDMVVAGTADAVLMVESEAKELPEDIMLGAVLYAHQEMQAVVQAVAELAKDAAKPVWDWKPEEVNAELKAKVEHGFADSVGVAYRITDKQKRYDRLSELRNQAVAELATEESGVSADEVKGLFAKIEKQIVRSRVVAGEPRIDGRDSKTVRPLHVEVGVLPKVHGSALFTRGETQALVVSTLGSARDAQIIDALEGERKDPFMLHYNFPPYSVGECGRMGATGRREIGHGRLARRGIGAVLPKEEDFPYTMRVVSEITESNGSSSMASVCGASLALMDAGVPLKAPVAGIAMGLVKEDNGFAVLTDILGDEDHLGDMDFKVAGTADGVTALQMDIKIEGITEEIMEIALGQAMDARLHILAEMNRVIASPRKELSENAPQFHTMKIDPDKIRDIIGKGGATIRSITEETGASIDIDDNGTIKIYADDGDGMQAAIARIEEITAEAEIGAVYQGKVVRIVDFGAFVNFLPGKDGLVHISQIAHERVQNVSDYLKEGQDIEVKCMDIDQRGRIKLSIKELLPAPEAETAEAPAGEGEE.

Mg(2+)-binding residues include Asp498 and Asp504. Residues 565–624 (PQFHTMKIDPDKIRDIIGKGGATIRSITEETGASIDIDDNGTIKIYADDGDGMQAAIARI) enclose the KH domain. In terms of domain architecture, S1 motif spans 634–702 (GAVYQGKVVR…QRGRIKLSIK (69 aa)).

This sequence belongs to the polyribonucleotide nucleotidyltransferase family. As to quaternary structure, component of the RNA degradosome, which is a multiprotein complex involved in RNA processing and mRNA degradation. Mg(2+) serves as cofactor.

Its subcellular location is the cytoplasm. It carries out the reaction RNA(n+1) + phosphate = RNA(n) + a ribonucleoside 5'-diphosphate. Functionally, involved in mRNA degradation. Catalyzes the phosphorolysis of single-stranded polyribonucleotides processively in the 3'- to 5'-direction. In Saccharophagus degradans (strain 2-40 / ATCC 43961 / DSM 17024), this protein is Polyribonucleotide nucleotidyltransferase.